Reading from the N-terminus, the 399-residue chain is DNA primase DnaG (399 aa).

One can recognise a Toprim domain in the interval 182-268 (DAIIVVEGRA…EVEDLTQKEI (87 aa)). Mg(2+)-binding residues include glutamate 188, aspartate 230, and aspartate 232.

This sequence belongs to the archaeal DnaG primase family. As to quaternary structure, forms a ternary complex with MCM helicase and DNA. Component of the archaeal exosome complex. Mg(2+) is required as a cofactor.

It catalyses the reaction ssDNA + n NTP = ssDNA/pppN(pN)n-1 hybrid + (n-1) diphosphate.. RNA polymerase that catalyzes the synthesis of short RNA molecules used as primers for DNA polymerase during DNA replication. Also part of the exosome, which is a complex involved in RNA degradation. Acts as a poly(A)-binding protein that enhances the interaction between heteromeric, adenine-rich transcripts and the exosome. The chain is DNA primase DnaG from Archaeoglobus fulgidus (strain ATCC 49558 / DSM 4304 / JCM 9628 / NBRC 100126 / VC-16).